A 562-amino-acid chain; its full sequence is Nucleoprotein (562 aa).

The interval 53–238 (MRRDKRDESD…ITQEESQINI (186 aa)) is binding site for the cap structure m7GTP. Residues Asp-381 and Glu-383 each contribute to the Mn(2+) site. Residues Glu-391, Cys-498, His-501, and Cys-522 each contribute to the Zn(2+) site. Asp-526 serves as a coordination point for Mn(2+).

It belongs to the arenaviridae nucleocapsid protein family. As to quaternary structure, homomultimerizes to form the nucleocapsid. Binds to viral genomic RNA. Interacts with glycoprotein G2. Interacts with protein Z; this interaction probably directs the encapsidated genome to budding sites. Interacts with protein L; this interaction does not interfere with Z-L interaction. Interacts with host IKBKE (via Protein kinase domain); the interaction inhibits IKBKE kinase activity.

The protein localises to the virion. The protein resides in the host cytoplasm. Functionally, encapsidates the genome, protecting it from nucleases. The encapsidated genomic RNA is termed the nucleocapsid (NC). Serves as template for viral transcription and replication. The increased presence of protein N in host cell does not seem to trigger the switch from transcription to replication as observed in other negative strain RNA viruses. Through the interaction with host IKBKE, strongly inhibits the phosphorylation and nuclear translocation of host IRF3, a protein involved in interferon activation pathway, leading to the inhibition of interferon-beta and IRF3-dependent promoters activation. Also encodes a functional 3'-5' exoribonuclease that degrades preferentially dsRNA substrates and thereby participates in the suppression of interferon induction. The sequence is that of Nucleoprotein from Bear Canyon mammarenavirus (isolate Mouse/United States/AV A0070039/2000) (BCNV).